The following is a 251-amino-acid chain: Small ribosomal subunit protein uS2 (251 aa).

The protein belongs to the universal ribosomal protein uS2 family.

In Synechococcus sp. (strain ATCC 27144 / PCC 6301 / SAUG 1402/1) (Anacystis nidulans), this protein is Small ribosomal subunit protein uS2.